The chain runs to 731 residues: Elongation factor 2 (731 aa).

A tr-type G domain is found at 19–234 (EYIRNIGICA…DIIDYCNEGK (216 aa)). Residues 28 to 35 (AHIDHGKT), 94 to 98 (DTPGH), and 148 to 151 (NKVD) each bind GTP. A Diphthamide modification is found at His-598.

It belongs to the TRAFAC class translation factor GTPase superfamily. Classic translation factor GTPase family. EF-G/EF-2 subfamily.

It is found in the cytoplasm. In terms of biological role, catalyzes the GTP-dependent ribosomal translocation step during translation elongation. During this step, the ribosome changes from the pre-translocational (PRE) to the post-translocational (POST) state as the newly formed A-site-bound peptidyl-tRNA and P-site-bound deacylated tRNA move to the P and E sites, respectively. Catalyzes the coordinated movement of the two tRNA molecules, the mRNA and conformational changes in the ribosome. This is Elongation factor 2 from Methanobrevibacter ruminantium (strain ATCC 35063 / DSM 1093 / JCM 13430 / OCM 146 / M1) (Methanobacterium ruminantium).